The chain runs to 409 residues: Peptidase T (409 aa).

His-78 lines the Zn(2+) pocket. The active site involves Asp-80. A Zn(2+)-binding site is contributed by Asp-140. The Proton acceptor role is filled by Glu-173. The Zn(2+) site is built by Glu-174, Asp-196, and His-379.

It belongs to the peptidase M20B family. The cofactor is Zn(2+).

It is found in the cytoplasm. The catalysed reaction is Release of the N-terminal residue from a tripeptide.. In terms of biological role, cleaves the N-terminal amino acid of tripeptides. The polypeptide is Peptidase T (Escherichia coli O139:H28 (strain E24377A / ETEC)).